A 320-amino-acid chain; its full sequence is L-lactate dehydrogenase A (320 aa).

Positions 88, 120, and 151 each coordinate substrate. Residue Asn120 coordinates NAD(+). The Proton acceptor role is filled by His175.

The protein belongs to the LDH/MDH superfamily. LDH family. In terms of assembly, homotetramer.

It localises to the cytoplasm. The catalysed reaction is (S)-lactate + NAD(+) = pyruvate + NADH + H(+). It participates in fermentation; pyruvate fermentation to lactate; (S)-lactate from pyruvate: step 1/1. In terms of biological role, converts pyruvate to lactate. The polypeptide is L-lactate dehydrogenase A (LDHA) (Rhizopus oryzae (Mucormycosis agent)).